Here is a 323-residue protein sequence, read N- to C-terminus: Mycothiol acetyltransferase (323 aa).

Glutamate 44 serves as a coordination point for 1D-myo-inositol 2-(L-cysteinylamino)-2-deoxy-alpha-D-glucopyranoside. Residue 98–100 participates in acetyl-CoA binding; that stretch reads LAV. In terms of domain architecture, N-acetyltransferase spans 173–323; it reads VSLRAFIPGQ…DVMYGPKNGG (151 aa). 1D-myo-inositol 2-(L-cysteinylamino)-2-deoxy-alpha-D-glucopyranoside is bound by residues glutamate 200, lysine 240, and glutamate 253. Acetyl-CoA-binding positions include 257-259 and 264-270; these read VGV and QGMGLGK. A 1D-myo-inositol 2-(L-cysteinylamino)-2-deoxy-alpha-D-glucopyranoside-binding site is contributed by tyrosine 291.

This sequence belongs to the acetyltransferase family. MshD subfamily. In terms of assembly, monomer.

The enzyme catalyses 1D-myo-inositol 2-(L-cysteinylamino)-2-deoxy-alpha-D-glucopyranoside + acetyl-CoA = mycothiol + CoA + H(+). In terms of biological role, catalyzes the transfer of acetyl from acetyl-CoA to desacetylmycothiol (Cys-GlcN-Ins) to form mycothiol. This Arthrobacter sp. (strain FB24) protein is Mycothiol acetyltransferase.